A 299-amino-acid polypeptide reads, in one-letter code: 6-phosphogluconate dehydrogenase, NAD(+)-dependent, decarboxylating (299 aa).

Residues 7-12 (GLGRMG), 67-69 (VPA), and Asn-95 contribute to the NAD(+) site. Substrate-binding residues include Asn-95, Ser-118, and Gly-120. Residue Lys-169 is the Proton acceptor of the active site. Substrate is bound at residue 172-173 (HN). Residue Glu-176 is the Proton donor of the active site. Substrate contacts are provided by Tyr-177 and Arg-268.

It belongs to the 6-phosphogluconate dehydrogenase family. In terms of assembly, homotetramer.

It carries out the reaction 6-phospho-D-gluconate + NAD(+) = D-ribulose 5-phosphate + CO2 + NADH. The protein operates within carbohydrate degradation; pentose phosphate pathway. Its function is as follows. Catalyzes the oxidative decarboxylation of 6-phosphogluconate to ribulose 5-phosphate and CO(2), with concomitant reduction of NAD to NADH. The polypeptide is 6-phosphogluconate dehydrogenase, NAD(+)-dependent, decarboxylating (Haloferax volcanii (strain ATCC 29605 / DSM 3757 / JCM 8879 / NBRC 14742 / NCIMB 2012 / VKM B-1768 / DS2) (Halobacterium volcanii)).